The primary structure comprises 43 residues: Lanthionine-containing peptide SapB (43 aa).

A signal peptide spans 1–21 (MALLDLQAMDTPAEDSFGELA). 2 consecutive cross-links (lanthionine (Ser-Cys)) follow at residues 24-31 (SQVSLLVC) and 34-41 (SSLSVVLC). 2 positions are modified to 2,3-didehydroalanine (Ser): S27 and S37.

The protein belongs to the lanthionine-containing morphogen protein family. In terms of processing, maturation involves the enzymatic conversion of Ser into dehydrated AA and the formation of thioether bonds with cysteine. This is followed by membrane translocation and cleavage of the modified precursor.

Lanthionine-containing peptide devoid of antibiotic properties, involved in the formation of aerial mycelium. Suggested to self-assemble at air-water interfaces, thus providing a film of surfactant through which nascent aerial hyphae can emerge. The aerial hyphae differentiate further into spores. This chain is Lanthionine-containing peptide SapB (ramS), found in Streptomyces griseus subsp. griseus (strain JCM 4626 / CBS 651.72 / NBRC 13350 / KCC S-0626 / ISP 5235).